Consider the following 391-residue polypeptide: Saxitoxin and tetrodotoxin-binding protein 2 (391 aa).

The first 20 residues, 1–20 (MGAVPGVVLLLMLAVLGIRA), serve as a signal peptide directing secretion. Repeat copies occupy residues 24–202 (PEEC…HKKS) and 203–391 (PEEC…PEQD). N-linked (GlcNAc...) asparagine glycans are attached at residues N41, N54, N63, N97, N234, N268, N277, and N307.

In terms of assembly, homodimer or heterodimer of PSTBP1 and PSTBP2. Post-translationally, glycosylated.

The protein localises to the secreted. Functionally, binds both saxitoxin and tetradotoxin. May play a role in toxin accumulation and/or excretion. The protein is Saxitoxin and tetrodotoxin-binding protein 2 (psbp2) of Takifugu pardalis (Panther puffer).